The chain runs to 121 residues: Huntingtin-interacting protein K (121 aa).

Acidic residues predominate over residues Met-1–Thr-13. Residues Met-1 to Lys-75 form a disordered region. Basic and acidic residues-rich tracts occupy residues Arg-20–Ile-47 and Gly-60–Lys-75. Ser-30 carries the post-translational modification Phosphoserine. A required for association with the NAA10-NAA15 complex region spans residues Leu-52–Asn-121. Residues Arg-62–Glu-107 adopt a coiled-coil conformation.

As to quaternary structure, component of the N-terminal acetyltransferase A (NatA)/HYPK complex at least composed of NAA10, NAA15 and HYPK, which has N-terminal acetyltransferase activity. Within the complex interacts with NAA10. Within the complex interacts with NAA15. Predominantly interacts with NAA15 in the NAA10-NAA15 complex (also called the NatA complex); the interaction with the NatA complex reduces the acetylation activity of the NatA complex. Interacts with HTT (via N-terminus). The NatA complex is required for HYPK stability and for reducing polyQ aggregation of HTT. Component of the N-terminal acetyltransferase E (NatE)/HYPK complex at least composed of NAA10, NAA15, NAA50 and HYPK. Within the complex interacts with NAA10 and NAA15. Does not interact with NAA50. Interaction with NAA15 reduces the capacity of NAA15 to interact with NAA50. Its capacity to interact with the NatA complex is reduced by NAA50. Does not interact with the N-terminal acetyltransferase B (NatB) complex component NAA25 or the N-terminal acetyltransferase C (NatC) complex component NAA35.

It localises to the nucleus. Its subcellular location is the cytoplasm. Functionally, component of several N-terminal acetyltransferase complexes. Inhibits the N-terminal acetylation activity of the N-terminal acetyltransferase NAA10-NAA15 complex (also called the NatA complex). Has chaperone-like activity preventing polyglutamine (polyQ) aggregation of HTT in neuronal cells probably while associated with the NatA complex. May play a role in the NatA complex-mediated N-terminal acetylation of PCNP. In Homo sapiens (Human), this protein is Huntingtin-interacting protein K.